The following is a 396-amino-acid chain: Elongation factor Tu (396 aa).

Residues 10-206 form the tr-type G domain; sequence KPHVNIGTIG…AVDESVPDPV (197 aa). The segment at 19–26 is G1; the sequence is GHVDHGKT. 19-26 serves as a coordination point for GTP; that stretch reads GHVDHGKT. Thr26 is a binding site for Mg(2+). The interval 62–66 is G2; it reads GITIN. Residues 83 to 86 are G3; the sequence is DAPG. GTP-binding positions include 83 to 87 and 138 to 141; these read DAPGH and NKSD. The tract at residues 138-141 is G4; the sequence is NKSD. The tract at residues 176-178 is G5; the sequence is SGL.

This sequence belongs to the TRAFAC class translation factor GTPase superfamily. Classic translation factor GTPase family. EF-Tu/EF-1A subfamily. Monomer.

It localises to the cytoplasm. The catalysed reaction is GTP + H2O = GDP + phosphate + H(+). Functionally, GTP hydrolase that promotes the GTP-dependent binding of aminoacyl-tRNA to the A-site of ribosomes during protein biosynthesis. The protein is Elongation factor Tu of Pseudarthrobacter chlorophenolicus (strain ATCC 700700 / DSM 12829 / CIP 107037 / JCM 12360 / KCTC 9906 / NCIMB 13794 / A6) (Arthrobacter chlorophenolicus).